We begin with the raw amino-acid sequence, 419 residues long: Voltage-gated potassium channel subunit beta-1 (419 aa).

The tract at residues 1–52 is disordered; it reads MLAARTGAAGSQISEENTKLRRQSGFSVAGKDKSPKKASENAKDSSLSPSGE. Basic and acidic residues predominate over residues 30–43; sequence GKDKSPKKASENAK. Residues threonine 108, tryptophan 109, glutamine 115, and aspartate 137 each coordinate NADP(+). Tyrosine 142 serves as the catalytic Proton donor/acceptor. Positions 210, 240, 241, 266, 295, 296, 297, 298, 299, 300, 306, 316, 375, 377, 381, 384, and 385 each coordinate NADP(+).

Belongs to the shaker potassium channel beta subunit family. Homotetramer. Interaction with tetrameric potassium channel alpha subunits gives rise to a heterooctamer. Identified in potassium channel complexes containing KCNA1, KCNA2, KCNA4, KCNA5, KCNA6, KCNAB1 and KCNAB2. Part of a complex containing KCNA1, KCNA4 and LGI1; interaction with LGI1 inhibits down-regulation of KCNA1 channel activity. Interacts with the dimer formed by GNB1 and GNG2; this enhances KCNA1 binding. Interacts with SQSTM1. In brain, expression is most prominent in caudate nucleus, hippocampus and thalamus. Significant expression also detected in amygdala and subthalamic nucleus. Also expressed in both healthy and cardiomyopathic heart. Up to four times more abundant in left ventricle than left atrium.

Its subcellular location is the cytoplasm. It localises to the membrane. It is found in the cell membrane. It carries out the reaction a primary alcohol + NADP(+) = an aldehyde + NADPH + H(+). It catalyses the reaction a secondary alcohol + NADP(+) = a ketone + NADPH + H(+). Functionally, regulatory subunit of the voltage-gated potassium (Kv) Shaker channels composed of pore-forming and potassium-conducting alpha subunits and of regulatory beta subunits. The beta-1/KCNAB1 cytoplasmic subunit mediates closure of delayed rectifier potassium channels by physically obstructing the pore via its N-terminal domain and increases the speed of channel closure for other family members. Promotes the inactivation of Kv1.1/KCNA1, Kv1.2/KCNA2, Kv1.4/KCNA4, Kv1.5/KCNA5 and Kv1.6/KCNA6 alpha subunit-containing channels. Displays nicotinamide adenine dinucleotide phosphate (NADPH)-dependent aldoketoreductase activity by catalyzing the NADPH-dependent reduction of a variety of endogenous aldehydes and ketones. The binding of NADPH is required for efficient down-regulation of potassium channel activity. Oxidation of the bound NADPH restrains N-terminal domain from blocking the channel, thereby decreasing N-type inactivation of potassium channel activity. Its function is as follows. Isoform KvB1.2 shows no effect on KCNA1, KCNA2 or KCNB1. The sequence is that of Voltage-gated potassium channel subunit beta-1 from Homo sapiens (Human).